A 296-amino-acid chain; its full sequence is tRNA U34 carboxymethyltransferase (296 aa).

Residues Lys64, Trp78, Lys83, Gly102, 124–126, 151–152, Tyr171, and Arg286 contribute to the carboxy-S-adenosyl-L-methionine site; these read DPS and VE.

This sequence belongs to the class I-like SAM-binding methyltransferase superfamily. CmoB family. Homotetramer.

It carries out the reaction carboxy-S-adenosyl-L-methionine + 5-hydroxyuridine(34) in tRNA = 5-carboxymethoxyuridine(34) in tRNA + S-adenosyl-L-homocysteine + H(+). Catalyzes carboxymethyl transfer from carboxy-S-adenosyl-L-methionine (Cx-SAM) to 5-hydroxyuridine (ho5U) to form 5-carboxymethoxyuridine (cmo5U) at position 34 in tRNAs. The chain is tRNA U34 carboxymethyltransferase from Sulfurimonas denitrificans (strain ATCC 33889 / DSM 1251) (Thiomicrospira denitrificans (strain ATCC 33889 / DSM 1251)).